Here is a 210-residue protein sequence, read N- to C-terminus: UMP-CMP kinase 3 (210 aa).

Gly-34–Thr-39 lines the ATP pocket. Residues Ser-54–Val-83 form an NMP region. A ribonucleoside 5'-phosphate is bound by residues Arg-60, Lys-81–Val-83, and Gly-108–Arg-111. Residue Asn-115 coordinates CMP. The LID stretch occupies residues Gly-146–Asp-154. Arg-147 contributes to the ATP binding site. 2 residues coordinate a ribonucleoside 5'-phosphate: Arg-151 and Arg-162. Lys-190 lines the ATP pocket.

This sequence belongs to the adenylate kinase family. UMP-CMP kinase subfamily. Monomer. It depends on Mg(2+) as a cofactor.

It localises to the cytoplasm. The protein resides in the nucleus. It carries out the reaction UMP + ATP = UDP + ADP. The enzyme catalyses CMP + ATP = CDP + ADP. The catalysed reaction is dCMP + ATP = dCDP + ADP. Catalyzes the phosphorylation of pyrimidine nucleoside monophosphates at the expense of ATP. Plays an important role in de novo pyrimidine nucleotide biosynthesis. Has preference for UMP and CMP as phosphate acceptors. The sequence is that of UMP-CMP kinase 3 (URA6) from Oryza sativa subsp. japonica (Rice).